The primary structure comprises 453 residues: Bifunctional protein GlmU (453 aa).

The interval 1 to 225 (MNIVILAAGT…EWETLGVNSK (225 aa)) is pyrophosphorylase. Residues 6–9 (LAAG), lysine 20, glutamine 71, 76–77 (GT), 98–100 (YGD), glycine 135, glutamate 150, asparagine 165, and asparagine 223 contribute to the UDP-N-acetyl-alpha-D-glucosamine site. Mg(2+) is bound at residue aspartate 100. Mg(2+) is bound at residue asparagine 223. Residues 226–246 (AQLAELERIHQRNVADALLAD) are linker. Residues 247–453 (GVTLADPARI…GYVRPVKKKS (207 aa)) form an N-acetyltransferase region. UDP-N-acetyl-alpha-D-glucosamine is bound by residues arginine 329 and lysine 347. Histidine 359 functions as the Proton acceptor in the catalytic mechanism. UDP-N-acetyl-alpha-D-glucosamine contacts are provided by tyrosine 362 and asparagine 373. Residues alanine 376, 382-383 (NY), serine 401, and alanine 419 contribute to the acetyl-CoA site.

This sequence in the N-terminal section; belongs to the N-acetylglucosamine-1-phosphate uridyltransferase family. The protein in the C-terminal section; belongs to the transferase hexapeptide repeat family. As to quaternary structure, homotrimer. Mg(2+) serves as cofactor.

It is found in the cytoplasm. The catalysed reaction is alpha-D-glucosamine 1-phosphate + acetyl-CoA = N-acetyl-alpha-D-glucosamine 1-phosphate + CoA + H(+). It carries out the reaction N-acetyl-alpha-D-glucosamine 1-phosphate + UTP + H(+) = UDP-N-acetyl-alpha-D-glucosamine + diphosphate. It participates in nucleotide-sugar biosynthesis; UDP-N-acetyl-alpha-D-glucosamine biosynthesis; N-acetyl-alpha-D-glucosamine 1-phosphate from alpha-D-glucosamine 6-phosphate (route II): step 2/2. Its pathway is nucleotide-sugar biosynthesis; UDP-N-acetyl-alpha-D-glucosamine biosynthesis; UDP-N-acetyl-alpha-D-glucosamine from N-acetyl-alpha-D-glucosamine 1-phosphate: step 1/1. It functions in the pathway bacterial outer membrane biogenesis; LPS lipid A biosynthesis. In terms of biological role, catalyzes the last two sequential reactions in the de novo biosynthetic pathway for UDP-N-acetylglucosamine (UDP-GlcNAc). The C-terminal domain catalyzes the transfer of acetyl group from acetyl coenzyme A to glucosamine-1-phosphate (GlcN-1-P) to produce N-acetylglucosamine-1-phosphate (GlcNAc-1-P), which is converted into UDP-GlcNAc by the transfer of uridine 5-monophosphate (from uridine 5-triphosphate), a reaction catalyzed by the N-terminal domain. The protein is Bifunctional protein GlmU of Burkholderia multivorans (strain ATCC 17616 / 249).